Reading from the N-terminus, the 1549-residue chain is MSPLLRSIFNITKIFNQYASHDCDGTTLSKKDLKNLLEREFGEILRKPHDPETVDLVLELQDRDRDGLIDFHEFLAIVFKVAAACYYALGQASGLNEKEAKCERKGNPLQDRRREDQRRFEPQDRQLEERRLKRQELEELAEEEELREKQVRREQRLQRREQEEYGGEEELQQRPKGRELEELLNREQRFERQEQRERQRLQVEQQQRQRGELRERQEEVQLQKRETQELQRERLEEEQQLQKQKRGLEERLLEQERREQELRRKEQERREQQLRQEQEEATQEEISERGESRTSRCQWQLESEADARQRKVYSRPHRQEQQSRRQEQELLERQQEQQISEEVQSLQEDQGRQRLKQEQRYDQNWRWQLEEESQRRRYTLYAKPAQREQVREEEQLRLKEEKLQREKRRQERERQYREVELQREEERLQREEEQLQREEREKRRRQEREKQYLEKVELWEEEQLQREEREKRRQEREKQYLEKVELREEEQLQRQEREKRRQERERQYLEKVELQEEEQLQREEREKRRQERERQYLEKVELQEEEQLQRQEREKRRQEREKQYLEKVELQEEEQLQRQERQKRRQEREKQYLEKVELQEEEQLQRQEREKRRQERERQYLEKVELQEEEQVQRQEREKRRQERERQYLEKELQRQEERLQEEEQLLREEREKRRQERERQYLEKVELQEEEQLQREEREKRRQERERQYLEKEELQRQEERLQREKEQLQREDREKRRQVRERKYLEEELQQEEDRLQREKQLLREDREKRQYLEKVELQREEEQLQREKRRQERERQYREEELLREEERLHRKEQQLQREECEKRRRQELERQLEEEELQRLDRKRQFRDDDQHQNEVRNSRVYSKHRENKEKSRQLDDSWVRESQFQQDLRPLQDEQEEKREREQEWRSRQKRDSQFPAEQLLEREQQKETERRDRKFREEEQLLKGQREEKIRYLEEDRKFREEEQQLRRLEREQQLRQERDRKFREELSRQERDRKFREEEQLLQEREEQLRRQERDRKFREEEQLLQEREEQLRRQERDRKFREEEQLLQEREEQLRRQERDRKFREEEQQLRLLEREQQLRQERNRKFREEQLLREREEQLRLQEGEPQLRQKRDRKFHEEEQLLQEREEQLRRQERDRKFREEAQILKEREEQLRRQERDRKFREEEQLLQEREELRRQEREPQLRQERDRKFREEEQLLQEREKLRRQEREPQLRQERDRKFHEEEQLLQEREEQLRRQERDRKFREEAQLLQEREEQLRRQERDRKFREEEQLLQEREEQLRRQERDRKFREEEQLLQEREEQLRRQERDRKFREEEQLLKESEEQLRRQERDRKFHEKEHLLREREEQQLRRQELEGVFSQEEQLRRAEQEEEQRRQRQRDRKFLEEEQSLQREREEEKRRVQEQDRKFLEQEEQLHREEQEELRRRQQLDQQYRAEEQFAREEKRRRQEQELRQEEQRRRQERERKFREEEQLRRQQQEEQKRRQERDVQQSRRQVWEEDKGRRQVLEAGKRQFASAPVRSSPLYEYIQEQRSQYRP.

Residues 1-91 form an S-100-like region; sequence MSPLLRSIFN…AAACYYALGQ (91 aa). EF-hand domains follow at residues 23-48 and 49-84; these read CDGT…LRKP and HDPE…VAAA. The Ca(2+) site is built by T27, D32, D62, D64, D66, and E73. Disordered regions lie at residues 97-125, 157-180, 262-359, and 404-448; these read EKEA…PQDR, LQRR…GREL, LRRK…KQEQ, and QREK…RQER. 3 stretches are compositionally biased toward basic and acidic residues: residues 171–180, 262–278, and 317–335; these read LQQRPKGREL, LRRK…RQEQ, and HRQE…ERQQ. Low complexity predominate over residues 336–348; that stretch reads EQQISEEVQSLQE. Positions 349-359 are enriched in basic and acidic residues; sequence DQGRQRLKQEQ. 14 consecutive repeat copies span residues 413–448, 449–476, 477–504, 505–532, 533–560, 561–588, 589–616, 617–644, 645–678, 679–706, 707–742, 743–771, 772–796, and 797–832. The segment at 413–832 is 14 X 28 AA approximate tandem repeats; that stretch reads ERQYREVELQ…ECEKRRRQEL (420 aa). Disordered regions lie at residues 782-803, 839-942, and 980-1000; these read REEE…YREE, EELQ…RKFR, and QLRQ…ERDR. 3 stretches are compositionally biased toward basic and acidic residues: residues 850 to 884, 895 to 918, and 925 to 942; these read FRDD…DSWV, PLQD…KRDS, and LLER…RKFR. 23 tandem repeats follow at residues 938 to 961, 962 to 985, 986 to 1021, 1022 to 1044, 1045 to 1067, 1068 to 1090, 1091 to 1121, 1122 to 1144, 1145 to 1167, 1168 to 1197, 1198 to 1227, 1228 to 1250, 1251 to 1273, 1274 to 1296, 1297 to 1319, 1320 to 1342, 1343 to 1368, 1369 to 1391, 1392 to 1416, 1417 to 1439, 1440 to 1461, 1462 to 1484, and 1485 to 1507. The 23 X 23 AA approximate tandem repeats stretch occupies residues 938–1507; the sequence is DRKFREEEQL…ERDVQQSRRQ (570 aa). Basic and acidic residues predominate over residues 1489–1523; that stretch reads QQEEQKRRQERDVQQSRRQVWEEDKGRRQVLEAGK. Residues 1489–1549 are disordered; that stretch reads QQEEQKRRQE…IQEQRSQYRP (61 aa).

Belongs to the S100-fused protein family. Homodimer. Substrate of transglutaminase. Some 200 arginines are probably converted to citrullines by peptidylarginine deimidase. As to expression, found in the hard keratinizing tissues such as the inner root sheath (IRS) of hair follicles and medulla, and in the epithelia of the tongue, hoof and rumen.

In terms of biological role, intermediate filament-associated protein that associates in regular arrays with keratin intermediate filaments (KIF) of the inner root sheath cells of the hair follicle and the granular layer of the epidermis. It later becomes cross-linked to KIF by isodipeptide bonds. It may serve as scaffold protein, together with involucrin, in the organization of the cell envelope or even anchor the cell envelope to the KIF network. It may be involved in its own calcium-dependent postsynthetic processing during terminal differentiation. In Ovis aries (Sheep), this protein is Trichohyalin (TCHH).